The primary structure comprises 600 residues: Proton channel OTOP1 (600 aa).

Residues 1–50 (MPGDRGALSSPAASSGSPSAAPSGIAACPPPPSPLARASPQASGPRRGAS) are disordered. Over 1–56 (MPGDRGALSSPAASSGSPSAAPSGIAACPPPPSPLARASPQASGPRRGASVPQKLA) the chain is Cytoplasmic. Residues 7–27 (ALSSPAASSGSPSAAPSGIAA) are compositionally biased toward low complexity. The helical transmembrane segment at 57–78 (ETLSSQYGLNVFVAGLLFLLAW) threads the bilayer. Topologically, residues 79-86 (AVHATGVG) are extracellular. A helical transmembrane segment spans residues 87 to 110 (KSDLLCVLTALMLLQLLWMLWYVG). Over 111-128 (RSYMQRRLIRPKDTHAGA) the chain is Cytoplasmic. Residues 129–151 (RWLRGSITLFAFITIVLGCLKVA) traverse the membrane as a helical segment. Topologically, residues 152–161 (YFIGFSECLS) are extracellular. Residues 162-186 (ATEGVFPVTHAVHTLLQVYFLWGHA) traverse the membrane as a helical segment. Topologically, residues 187–194 (KDIIMSFK) are cytoplasmic. The helical transmembrane segment at 195-221 (TLERFGVIHSVFTNLLLWANSVLNESK) threads the bilayer. The Extracellular segment spans residues 222–262 (HQLNEHKERLITLGFGNITIVLDDHTPQCNCTPPALCSALS). The chain crosses the membrane as a helical span at residues 263-288 (HGIYYLYPFNIEYQILASTMLYVLWK). Residues 289 to 309 (NIGRRVDSSRHQKMQCRFDGV) lie on the Cytoplasmic side of the membrane. The chain crosses the membrane as a helical span at residues 310 to 332 (LVGSVLGLTVLAATIAVVVVYMI). Over 333–342 (HIGRSKSKSE) the chain is Extracellular. Residues 343-368 (SALIMFYLYAITVLLLMGAAGLVGSW) form a helical membrane-spanning segment. At 369–386 (IYRVDEKSLDESKNPARK) the chain is on the cytoplasmic side. The helical transmembrane segment at 387-411 (LDADLLVATASGSWLLSWGSILAIA) threads the bilayer. Residues 412–421 (CAETRPPYTW) lie on the Extracellular side of the membrane. The chain crosses the membrane as a helical span at residues 422-442 (YNLPYSVLVIVEKYVQNIFII). The Cytoplasmic portion of the chain corresponds to 443-532 (ESVHLEPEGV…QGGMKRRLLR (90 aa)). The chain crosses the membrane as a helical span at residues 533-551 (NITAFLFLCNISLWIPPAF). Residues 552 to 569 (GCRPEYDNGLEEIVFGFE) are Extracellular-facing. A helical transmembrane segment spans residues 570 to 593 (PWIIVVNLAMPFSIFYRMHAAAAL). The Cytoplasmic segment spans residues 594–600 (FEVYCKI).

It belongs to the otopetrin family. Homodimer. Interacts with STAT1, independently of STAT1 phosphorylation status.

The protein resides in the cell membrane. Its subcellular location is the cell projection. The protein localises to the microvillus. It catalyses the reaction H(+)(in) = H(+)(out). Its activity is regulated as follows. Activated by both acid and alkali, with proton influx in response to extracellular acid and proton efflux during alkali stimulation. Inhibited by Zn(2+); this inhibition is thought to be pH-sensitive. Currents evoked in response to mild acid (pH 6.0) stimulus may also be mildly potentiated by exposure to Zn(2+). Activated by NH(4)Cl. In terms of biological role, proton-selective ion channel. Biphasically modulated by acid and alkali, mediating proton influx and efflux in response to extracellular acid and base stimulation, respectively. Sour taste receptor, which carries inward currents in response to extracellular acidification. Sensor for ammonium chloride (NH(4)Cl) in taste receptor cells. NH(4)Cl acts by increasing the intracellular pH, thereby generating a driving force for proton entry through OTOP1 channel. Might also participate in alkaline sensation. Plays a role in the regulation of Ca(2+) flux in response to purigenic (ATP, ADP and UDP) stimuli, leading to increase in cytosolic Ca(2+) due to influx of extracellular calcium. May play this role by inhibiting P2Y purinoceptor-mediated Ca(2+) release in a Ca(2+)-dependent manner and promote an influx of Ca(2+) in response to ATP. Through this mechanism and possibly others, plays a role in the formation and function of calcium carbonate-based structures in the vestibular system of the inner ear, called otoconia, that sense gravity and linear acceleration. In obesity, may attenuate adipose tissue inflammation, through the negative regulation of IFNG signaling, hence may play an adaptive role in the maintainance of metabolic homeostasis. Following alkali activation, may also be permeable Na(+), K(+), Cs(+) and Li(+). This is Proton channel OTOP1 from Rattus norvegicus (Rat).